The primary structure comprises 311 residues: Methionyl-tRNA formyltransferase (311 aa).

110–113 is a binding site for (6S)-5,6,7,8-tetrahydrofolate; it reads SLLP.

This sequence belongs to the Fmt family.

It carries out the reaction L-methionyl-tRNA(fMet) + (6R)-10-formyltetrahydrofolate = N-formyl-L-methionyl-tRNA(fMet) + (6S)-5,6,7,8-tetrahydrofolate + H(+). Attaches a formyl group to the free amino group of methionyl-tRNA(fMet). The formyl group appears to play a dual role in the initiator identity of N-formylmethionyl-tRNA by promoting its recognition by IF2 and preventing the misappropriation of this tRNA by the elongation apparatus. The sequence is that of Methionyl-tRNA formyltransferase from Streptococcus pyogenes serotype M1.